The primary structure comprises 513 residues: Glucose-6-phosphate 1-dehydrogenase 2 (513 aa).

A2 is subject to N-acetylalanine. S8 carries the post-translational modification Phosphoserine. T10 carries the phosphothreonine modification. NADP(+)-binding positions include 38–45 (GASGDLAK) and R72. K89 is modified (N6-acetyllysine). 2 residues coordinate NADP(+): Y147 and K171. D-glucose 6-phosphate contacts are provided by residues K171, 201-205 (HYLDK), E239, and D258. An N6-(2-hydroxyisobutyryl)lysine; alternate modification is found at K171. K171 carries the N6-acetyllysine; alternate modification. Catalysis depends on H263, which acts as the Proton acceptor. R357 lines the NADP(+) pocket. D-glucose 6-phosphate-binding residues include K360 and R365. Residues K366, R370, and R393 each coordinate NADP(+). Q395 serves as a coordination point for D-glucose 6-phosphate. 421–423 (DLT) contacts NADP(+). K432 carries the N6-acetyllysine modification. The NADP(+) site is built by R487 and Y503. At Y503 the chain carries Phosphotyrosine.

This sequence belongs to the glucose-6-phosphate dehydrogenase family. Homotetramer; dimer of dimers. Interacts with SIRT2; the interaction is enhanced by H(2)O(2) treatment. In terms of processing, acetylated by ELP3; acetylation inhibits its homodimerization and enzyme activity. Deacetylated by SIRT2; deacetylation stimulates its enzyme activity. Testis.

The protein resides in the cytoplasm. The protein localises to the cytosol. It is found in the membrane. The catalysed reaction is D-glucose 6-phosphate + NADP(+) = 6-phospho-D-glucono-1,5-lactone + NADPH + H(+). The protein operates within carbohydrate degradation; pentose phosphate pathway; D-ribulose 5-phosphate from D-glucose 6-phosphate (oxidative stage): step 1/3. Catalyzes the rate-limiting step of the oxidative pentose-phosphate pathway, which represents a route for the dissimilation of carbohydrates besides glycolysis. The main function of this enzyme is to provide reducing power (NADPH) and pentose phosphates for fatty acid and nucleic acid synthesis. This chain is Glucose-6-phosphate 1-dehydrogenase 2 (G6pd2), found in Mus musculus (Mouse).